A 416-amino-acid polypeptide reads, in one-letter code: MSISKESSKTMIDIEKKGGEGKDGKGGSKMTKNEQFLLPFTFILIGLSSLNVWNTALGLNINFKYNTFQITGLVCSSIIALFVKVPKMLLPFALGGLAMLCAGFQIAHQCFTFEQFDTYCLIAFIVIGIMAGLAQTIAFSVGTTMEENMGGYMSAGIGISGVFIFIINLLLDQIVPDQKKFNVNEAKLLYLFLICELCLVLAIIFSVCNLELSSSKTSKEEEYSDKEQGLSYLELLKDSYKAILAMFLVNWLSLQLFPGVGHKKWQESHNISDYNVTLIVGMFQVFDFVSRYPPNLSHMKIFKWFTFSLNKLLLLNFLRLLFIPWFVINAACDLPIFTNIVQQCVCMAMLAFTNGWFNTVPFLVFVQELKKAKKKKDIETISTFLVVAMFVGLFMGIWTTYIYDFFPIVIKRYVVP.

The segment covering 1 to 26 has biased composition (basic and acidic residues); the sequence is MSISKESSKTMIDIEKKGGEGKDGKG. A disordered region spans residues 1 to 28; that stretch reads MSISKESSKTMIDIEKKGGEGKDGKGGS. Over 1 to 35 the chain is Cytoplasmic; the sequence is MSISKESSKTMIDIEKKGGEGKDGKGGSKMTKNEQ. A helical membrane pass occupies residues 36-58; the sequence is FLLPFTFILIGLSSLNVWNTALG. Residues 59 to 64 are Extracellular-facing; that stretch reads LNINFK. Residues 65–83 form a helical membrane-spanning segment; sequence YNTFQITGLVCSSIIALFV. Over 84-87 the chain is Cytoplasmic; it reads KVPK. A helical membrane pass occupies residues 88 to 107; that stretch reads MLLPFALGGLAMLCAGFQIA. Topologically, residues 108-119 are extracellular; that stretch reads HQCFTFEQFDTY. Residues 120 to 139 form a helical membrane-spanning segment; the sequence is CLIAFIVIGIMAGLAQTIAF. At 140–148 the chain is on the cytoplasmic side; it reads SVGTTMEEN. A helical transmembrane segment spans residues 149–171; the sequence is MGGYMSAGIGISGVFIFIINLLL. The Extracellular segment spans residues 172 to 187; it reads DQIVPDQKKFNVNEAK. Residues 188–210 traverse the membrane as a helical segment; the sequence is LLYLFLICELCLVLAIIFSVCNL. At 211–241 the chain is on the cytoplasmic side; the sequence is ELSSSKTSKEEEYSDKEQGLSYLELLKDSYK. The chain crosses the membrane as a helical span at residues 242–261; that stretch reads AILAMFLVNWLSLQLFPGVG. Residues 262-273 are Extracellular-facing; it reads HKKWQESHNISD. The helical transmembrane segment at 274–292 threads the bilayer; the sequence is YNVTLIVGMFQVFDFVSRY. At 293–311 the chain is on the cytoplasmic side; that stretch reads PPNLSHMKIFKWFTFSLNK. A helical transmembrane segment spans residues 312 to 331; the sequence is LLLLNFLRLLFIPWFVINAA. The Extracellular segment spans residues 332–343; sequence CDLPIFTNIVQQ. Residues 344 to 366 form a helical membrane-spanning segment; that stretch reads CVCMAMLAFTNGWFNTVPFLVFV. The Cytoplasmic portion of the chain corresponds to 367–380; it reads QELKKAKKKKDIET. The chain crosses the membrane as a helical span at residues 381–403; that stretch reads ISTFLVVAMFVGLFMGIWTTYIY. At 404–416 the chain is on the extracellular side; sequence DFFPIVIKRYVVP.

It belongs to the SLC29A/ENT transporter (TC 2.A.57) family.

It localises to the cell membrane. It catalyses the reaction inosine(in) = inosine(out). The enzyme catalyses adenosine(in) = adenosine(out). It carries out the reaction hypoxanthine(out) = hypoxanthine(in). The catalysed reaction is guanosine(in) = guanosine(out). It catalyses the reaction guanine(out) = guanine(in). The enzyme catalyses thymidine(in) = thymidine(out). It carries out the reaction uridine(out) = uridine(in). The catalysed reaction is uracil(in) = uracil(out). It catalyses the reaction thymine(out) = thymine(in). The enzyme catalyses adenine(out) = adenine(in). It carries out the reaction cytosine(out) = cytosine(in). The catalysed reaction is xanthine(out) = xanthine(in). Its function is as follows. Nucleoside and nucleobase transporter with a broad substrate specificity. The sequence is that of Nucleoside transporter 1 from Plasmodium vivax (strain Salvador I).